We begin with the raw amino-acid sequence, 486 residues long: Glutamyl-tRNA(Gln) amidotransferase subunit A (486 aa).

Active-site charge relay system residues include K80 and S155. S179 (acyl-ester intermediate) is an active-site residue.

This sequence belongs to the amidase family. GatA subfamily. As to quaternary structure, heterotrimer of A, B and C subunits.

It carries out the reaction L-glutamyl-tRNA(Gln) + L-glutamine + ATP + H2O = L-glutaminyl-tRNA(Gln) + L-glutamate + ADP + phosphate + H(+). Functionally, allows the formation of correctly charged Gln-tRNA(Gln) through the transamidation of misacylated Glu-tRNA(Gln) in organisms which lack glutaminyl-tRNA synthetase. The reaction takes place in the presence of glutamine and ATP through an activated gamma-phospho-Glu-tRNA(Gln). This is Glutamyl-tRNA(Gln) amidotransferase subunit A from Geobacillus sp. (strain WCH70).